The following is a 398-amino-acid chain: 1-deoxy-D-xylulose 5-phosphate reductoisomerase (398 aa).

The NADPH site is built by Thr-10, Gly-11, Ser-12, Ile-13, Asn-38, and Asn-124. Position 125 (Lys-125) interacts with 1-deoxy-D-xylulose 5-phosphate. Position 126 (Glu-126) interacts with NADPH. Asp-150 provides a ligand contact to Mn(2+). 4 residues coordinate 1-deoxy-D-xylulose 5-phosphate: Ser-151, Glu-152, Ser-186, and His-209. Mn(2+) is bound at residue Glu-152. Gly-215 provides a ligand contact to NADPH. The 1-deoxy-D-xylulose 5-phosphate site is built by Ser-222, Asn-227, Lys-228, and Glu-231. Glu-231 is a Mn(2+) binding site.

Belongs to the DXR family. Requires Mg(2+) as cofactor. It depends on Mn(2+) as a cofactor.

It carries out the reaction 2-C-methyl-D-erythritol 4-phosphate + NADP(+) = 1-deoxy-D-xylulose 5-phosphate + NADPH + H(+). Its pathway is isoprenoid biosynthesis; isopentenyl diphosphate biosynthesis via DXP pathway; isopentenyl diphosphate from 1-deoxy-D-xylulose 5-phosphate: step 1/6. Its function is as follows. Catalyzes the NADPH-dependent rearrangement and reduction of 1-deoxy-D-xylulose-5-phosphate (DXP) to 2-C-methyl-D-erythritol 4-phosphate (MEP). The polypeptide is 1-deoxy-D-xylulose 5-phosphate reductoisomerase (Baumannia cicadellinicola subsp. Homalodisca coagulata).